Reading from the N-terminus, the 430-residue chain is Adenylosuccinate synthetase (430 aa).

GTP is bound by residues 13–19 and 41–43; these read GDEGKGK and GHT. The active-site Proton acceptor is the Asp-14. Asp-14 and Gly-41 together coordinate Mg(2+). IMP contacts are provided by residues 14–17, 39–42, Thr-130, Arg-144, Gln-225, Thr-240, and Arg-304; these read DEGK and NAGH. Residue His-42 is the Proton donor of the active site. Residue 300–306 coordinates substrate; that stretch reads STTGRAR. GTP contacts are provided by residues Arg-306, 332–334, and 414–416; these read KLD and STG.

The protein belongs to the adenylosuccinate synthetase family. Homodimer. Mg(2+) serves as cofactor.

It is found in the cytoplasm. The enzyme catalyses IMP + L-aspartate + GTP = N(6)-(1,2-dicarboxyethyl)-AMP + GDP + phosphate + 2 H(+). Its pathway is purine metabolism; AMP biosynthesis via de novo pathway; AMP from IMP: step 1/2. Plays an important role in the de novo pathway of purine nucleotide biosynthesis. Catalyzes the first committed step in the biosynthesis of AMP from IMP. The chain is Adenylosuccinate synthetase from Pseudomonas putida (strain ATCC 700007 / DSM 6899 / JCM 31910 / BCRC 17059 / LMG 24140 / F1).